The sequence spans 49 residues: Splenin (49 aa).

The region spanning 4 to 47 (LEDPSVLTKEKLKSELVANNVTLPAGEQRKEVYVELYLQHLTAL) is the LEM-like domain. Positions 32-36 (RKEVY) are essential for biological activity.

This sequence belongs to the thymopoietin family.

In terms of biological role, hormone of the spleen with pleiotropic actions on prothymocytes, mature T-cells, the nicotinic acetylcholine receptor, and pituitary corticotrophs. This chain is Splenin (SP), found in Bos taurus (Bovine).